A 161-amino-acid polypeptide reads, in one-letter code: MPSFDTVCEANLVDVRNAVENTAKEIATRFDFKGTAASITIQEREITLIGDADFQLTQIEDVLRNKLTKRSVDVRFLDIGEVRKIGGDKVKQLLKVRSGIESELARKIQKLLKDSKLKVQGAIQEDKVRVTGAKRDDLQAAMALIRKEVTDVPLSFDNFRD.

This sequence belongs to the YajQ family.

Functionally, nucleotide-binding protein. This chain is Nucleotide-binding protein Veis_3464, found in Verminephrobacter eiseniae (strain EF01-2).